A 313-amino-acid polypeptide reads, in one-letter code: MGFLGYIYNCIRIHVSLAPIVEWRPAQAGRQYRRFPMKIKALVVLFNGALLLLCMGTGYVLFLTPVRGTGWQSVRAYGIFFLIFLLLFLLINTLYVKNRRLLRYLDAEDWSALAALLEEEVFTRNRVALRRVSLLSESLILLSDFEALERLEHFVHAQRPRYIMKCALTFAVGKLLAGKYSELRTFMTRVAATQAPVQPWTRFYLAFACHLCGDFEQAHAHLLTLVHTKRQPLIRVLSAYLLSEVLPEKLRRAPAHDAQLIARGCAHAAQVRADVHAHYTPRRWADYENRKKQNVDVLVFLKLMQDARAWLFP.

2 consecutive transmembrane segments (helical) span residues 42 to 64 and 74 to 96; these read LVVLFNGALLLLCMGTGYVLFLT and VRAYGIFFLIFLLLFLLINTLYV.

Its subcellular location is the cell membrane. This is an uncharacterized protein from Treponema pallidum (strain Nichols).